The chain runs to 391 residues: Elongation factor Tu (391 aa).

The tr-type G domain maps to 10-201; the sequence is KPHVNIGTIG…AVDDYIPTPE (192 aa). The G1 stretch occupies residues 19 to 26; that stretch reads GHVDHGKT. Residue 19 to 26 participates in GTP binding; it reads GHVDHGKT. Threonine 26 contacts Mg(2+). The interval 55–59 is G2; the sequence is GITIS. The interval 76–79 is G3; the sequence is DCPG. GTP-binding positions include 76-80 and 131-134; these read DCPGH and NKCD. A G4 region spans residues 131–134; it reads NKCD. The segment at 169–171 is G5; sequence SAL.

It belongs to the TRAFAC class translation factor GTPase superfamily. Classic translation factor GTPase family. EF-Tu/EF-1A subfamily. Monomer.

It is found in the cytoplasm. It carries out the reaction GTP + H2O = GDP + phosphate + H(+). In terms of biological role, GTP hydrolase that promotes the GTP-dependent binding of aminoacyl-tRNA to the A-site of ribosomes during protein biosynthesis. The polypeptide is Elongation factor Tu (Brucella anthropi (strain ATCC 49188 / DSM 6882 / CCUG 24695 / JCM 21032 / LMG 3331 / NBRC 15819 / NCTC 12168 / Alc 37) (Ochrobactrum anthropi)).